Reading from the N-terminus, the 508-residue chain is Maturase K (508 aa).

Belongs to the intron maturase 2 family. MatK subfamily.

The protein resides in the plastid. It localises to the chloroplast. Functionally, usually encoded in the trnK tRNA gene intron. Probably assists in splicing its own and other chloroplast group II introns. This Lupinus cosentinii (West Australian blue lupine) protein is Maturase K.